Consider the following 77-residue polypeptide: uncharacterized protein (77 aa).

Residues 49-71 form a helical membrane-spanning segment; it reads LVIASLILAIILLGILYYISYQM.

Its subcellular location is the membrane. This is an uncharacterized protein from Archaeoglobus fulgidus (strain ATCC 49558 / DSM 4304 / JCM 9628 / NBRC 100126 / VC-16).